Consider the following 191-residue polypeptide: Potassium-transporting ATPase KdpC subunit (191 aa).

The chain crosses the membrane as a helical span at residues 11 to 31 (LFVLLTAVTGVVYPLAVTGIA).

It belongs to the KdpC family. In terms of assembly, the system is composed of three essential subunits: KdpA, KdpB and KdpC.

The protein localises to the cell inner membrane. In terms of biological role, part of the high-affinity ATP-driven potassium transport (or Kdp) system, which catalyzes the hydrolysis of ATP coupled with the electrogenic transport of potassium into the cytoplasm. This subunit acts as a catalytic chaperone that increases the ATP-binding affinity of the ATP-hydrolyzing subunit KdpB by the formation of a transient KdpB/KdpC/ATP ternary complex. This is Potassium-transporting ATPase KdpC subunit from Dechloromonas aromatica (strain RCB).